The chain runs to 414 residues: Mannan endo-1,4-beta-mannosidase 3 (414 aa).

Residues 1–19 form the signal peptide; it reads MKCLCFVVLLAILIAQNSS. Residues N17 and N75 are each glycosylated (N-linked (GlcNAc...) asparagine). Substrate is bound at residue W87. Residues N133 and N153 are each glycosylated (N-linked (GlcNAc...) asparagine). Position 202 (N202) interacts with substrate. Residue E203 is the Proton donor of the active site. Y283 provides a ligand contact to substrate. Residue E323 is the Nucleophile of the active site. N-linked (GlcNAc...) asparagine glycosylation is present at N343. W365 is a substrate binding site. N-linked (GlcNAc...) asparagine glycosylation is present at N386.

The protein belongs to the glycosyl hydrolase 5 (cellulase A) family. As to expression, expressed in leaves, flowers, siliques and seeds.

The protein resides in the secreted. It catalyses the reaction Random hydrolysis of (1-&gt;4)-beta-D-mannosidic linkages in mannans, galactomannans and glucomannans.. The polypeptide is Mannan endo-1,4-beta-mannosidase 3 (MAN3) (Arabidopsis thaliana (Mouse-ear cress)).